A 182-amino-acid chain; its full sequence is Fucoxanthin-chlorophyll a-c binding protein D, chloroplastic (182 aa).

Residues 1 to 4 (AMKM) constitute a chloroplast transit peptide. Helical transmembrane passes span 46–66 (IAMLAIAGHLTQQNARLPGML), 87–107 (IPPGGLAQIFGFIGFLELAVM), and 148–168 (GRAAQMGILALMVHEELNNKP).

It belongs to the fucoxanthin chlorophyll protein family. In terms of assembly, the LHC complex of chromophytic algae is composed of fucoxanthin, chlorophyll A and C bound non-covalently by fucoxanthin chlorophyll proteins (FCPs). The ratio of pigments in this LHC is; fucoxanthin: chlorophyll C: chlorophyll A; (0.6-1): (0.1-0.3): (1).

It localises to the plastid. Its subcellular location is the chloroplast thylakoid membrane. Functionally, the light-harvesting complex (LHC) functions as a light receptor, it captures and delivers excitation energy to photosystems with which it is closely associated. Energy is transferred from the carotenoid and chlorophyll C (or B) to chlorophyll A and the photosynthetic reaction centers where it is used to synthesize ATP and reducing power. This Macrocystis pyrifera (Giant kelp) protein is Fucoxanthin-chlorophyll a-c binding protein D, chloroplastic (FCPD).